The following is a 329-amino-acid chain: MFVFVGSTVSLTAIVAAPVLTWIWANHLEPNLLKLTRLDWRLPKKFAHLHGLRIVQISDLHLNQSTPDAFLKKISRKVSSLSPDMLVFTGDFICRAKVESSNKLKNFLCSLNAPLGCFACLGNHDYATYVSRDIHGKINTIPETSSRPLRRALTSVYQSLFSSSHNEFAEEFTPQDPNPHLLSILHNTPFQLLHNQSVTLSDVVNIVGLGDFFAKQFDPKKAFTNYNPTLPGIILSHNPDTIHYLKDYPGDVVFSGHSHGPQISLPWPKFANTITNKLSGLENPELARGLFSFPQEKRLLYVNRGLGGWKRIRFFSPPEICIMRCLYEP.

Residues 2-24 form a helical membrane-spanning segment; sequence FVFVGSTVSLTAIVAAPVLTWIW. Residues aspartate 59, histidine 61, aspartate 91, asparagine 123, histidine 257, and histidine 259 each coordinate a divalent metal cation.

This sequence belongs to the metallophosphoesterase superfamily. Mn(2+) serves as cofactor.

It localises to the cell inner membrane. It carries out the reaction UDP-2,3-diacyl-alpha-D-glucosamine + H2O = 2,3-diacyl-alpha-D-glucosaminyl 1-phosphate + UMP + 2 H(+). The protein operates within glycolipid biosynthesis; lipid IV(A) biosynthesis. Hydrolyzes the pyrophosphate bond of UDP-2,3-diacylglucosamine to form 2,3-diacylglucosamine 1-phosphate (lipid X) and UMP by catalyzing the attack of water at the alpha-P atom. Involved in the biosynthesis of lipid A, a phosphorylated glycolipid that anchors the lipooligosaccharide (LOS) to the outer membrane of the cell. The sequence is that of UDP-2,3-diacylglucosamine pyrophosphatase LpxG from Chlamydia muridarum (strain MoPn / Nigg).